The sequence spans 620 residues: 1-deoxy-D-xylulose-5-phosphate synthase (620 aa).

Thiamine diphosphate contacts are provided by residues His-80 and 121–123 (GHS). Asp-152 contributes to the Mg(2+) binding site. Thiamine diphosphate-binding positions include 153–154 (GA), Asn-181, Tyr-288, and Glu-370. Asn-181 is a Mg(2+) binding site.

It belongs to the transketolase family. DXPS subfamily. In terms of assembly, homodimer. Mg(2+) serves as cofactor. It depends on thiamine diphosphate as a cofactor.

It carries out the reaction D-glyceraldehyde 3-phosphate + pyruvate + H(+) = 1-deoxy-D-xylulose 5-phosphate + CO2. It participates in metabolic intermediate biosynthesis; 1-deoxy-D-xylulose 5-phosphate biosynthesis; 1-deoxy-D-xylulose 5-phosphate from D-glyceraldehyde 3-phosphate and pyruvate: step 1/1. In terms of biological role, catalyzes the acyloin condensation reaction between C atoms 2 and 3 of pyruvate and glyceraldehyde 3-phosphate to yield 1-deoxy-D-xylulose-5-phosphate (DXP). This Escherichia fergusonii (strain ATCC 35469 / DSM 13698 / CCUG 18766 / IAM 14443 / JCM 21226 / LMG 7866 / NBRC 102419 / NCTC 12128 / CDC 0568-73) protein is 1-deoxy-D-xylulose-5-phosphate synthase.